Here is an 81-residue protein sequence, read N- to C-terminus: MEKTVSRKVVVLAILLSLSCLCIAKASKGEEKTSGELRDVTPQRGGPCSYDNLCHNHCPGCKITQCVNGECVCLICYTPPL.

Residues 1-26 (MEKTVSRKVVVLAILLSLSCLCIAKA) form the signal peptide. 3 disulfides stabilise this stretch: Cys-48/Cys-66, Cys-54/Cys-71, and Cys-58/Cys-73.

The protein belongs to the DEFL family.

It is found in the secreted. The polypeptide is Putative defensin-like protein 265 (Arabidopsis thaliana (Mouse-ear cress)).